The following is a 98-amino-acid chain: NADH-ubiquinone oxidoreductase chain 4L (98 aa).

Transmembrane regions (helical) follow at residues 2–22 (QMTM…LLMF), 26–46 (FMSS…LMSI), and 59–79 (FPLV…SLLV).

This sequence belongs to the complex I subunit 4L family. In terms of assembly, core subunit of respiratory chain NADH dehydrogenase (Complex I) which is composed of 45 different subunits.

It is found in the mitochondrion inner membrane. It catalyses the reaction a ubiquinone + NADH + 5 H(+)(in) = a ubiquinol + NAD(+) + 4 H(+)(out). Functionally, core subunit of the mitochondrial membrane respiratory chain NADH dehydrogenase (Complex I) which catalyzes electron transfer from NADH through the respiratory chain, using ubiquinone as an electron acceptor. Part of the enzyme membrane arm which is embedded in the lipid bilayer and involved in proton translocation. In Echinosorex gymnura (Moon rat), this protein is NADH-ubiquinone oxidoreductase chain 4L (MT-ND4L).